We begin with the raw amino-acid sequence, 239 residues long: 4-hydroxy-tetrahydrodipicolinate reductase (239 aa).

NAD(+) is bound by residues aspartate 32, 73–75 (GTT), and 98–101 (ASNF). Histidine 133 (proton donor/acceptor) is an active-site residue. Residue histidine 134 coordinates (S)-2,3,4,5-tetrahydrodipicolinate. Lysine 137 functions as the Proton donor in the catalytic mechanism. 143–144 (GT) provides a ligand contact to (S)-2,3,4,5-tetrahydrodipicolinate.

Belongs to the DapB family.

It is found in the cytoplasm. It carries out the reaction (S)-2,3,4,5-tetrahydrodipicolinate + NAD(+) + H2O = (2S,4S)-4-hydroxy-2,3,4,5-tetrahydrodipicolinate + NADH + H(+). It catalyses the reaction (S)-2,3,4,5-tetrahydrodipicolinate + NADP(+) + H2O = (2S,4S)-4-hydroxy-2,3,4,5-tetrahydrodipicolinate + NADPH + H(+). The protein operates within amino-acid biosynthesis; L-lysine biosynthesis via DAP pathway; (S)-tetrahydrodipicolinate from L-aspartate: step 4/4. Its function is as follows. Catalyzes the conversion of 4-hydroxy-tetrahydrodipicolinate (HTPA) to tetrahydrodipicolinate. The sequence is that of 4-hydroxy-tetrahydrodipicolinate reductase from Christiangramia forsetii (strain DSM 17595 / CGMCC 1.15422 / KT0803) (Gramella forsetii).